Consider the following 62-residue polypeptide: Photosystem II reaction center protein Z (62 aa).

Helical transmembrane passes span 8–28 and 41–61; these read VLTALVFFSFVMVVAVPVAYA and YVGSAIWIGLVLLVAILNFLV.

Belongs to the PsbZ family. In terms of assembly, PSII is composed of 1 copy each of membrane proteins PsbA, PsbB, PsbC, PsbD, PsbE, PsbF, PsbH, PsbI, PsbJ, PsbK, PsbL, PsbM, PsbT, PsbX, PsbY, PsbZ, Psb30/Ycf12, peripheral proteins PsbO, CyanoQ (PsbQ), PsbU, PsbV and a large number of cofactors. It forms dimeric complexes.

The protein localises to the cellular thylakoid membrane. May control the interaction of photosystem II (PSII) cores with the light-harvesting antenna, regulates electron flow through the 2 photosystem reaction centers. PSII is a light-driven water plastoquinone oxidoreductase, using light energy to abstract electrons from H(2)O, generating a proton gradient subsequently used for ATP formation. The polypeptide is Photosystem II reaction center protein Z (Crocosphaera subtropica (strain ATCC 51142 / BH68) (Cyanothece sp. (strain ATCC 51142))).